A 183-amino-acid polypeptide reads, in one-letter code: Ribosome maturation factor RimM (183 aa).

The PRC barrel domain occupies 104–183 (EGDYYWKDLM…TIEVDWDPGF (80 aa)).

Belongs to the RimM family. As to quaternary structure, binds ribosomal protein uS19.

Its subcellular location is the cytoplasm. An accessory protein needed during the final step in the assembly of 30S ribosomal subunit, possibly for assembly of the head region. Essential for efficient processing of 16S rRNA. May be needed both before and after RbfA during the maturation of 16S rRNA. It has affinity for free ribosomal 30S subunits but not for 70S ribosomes. The chain is Ribosome maturation factor RimM from Salmonella arizonae (strain ATCC BAA-731 / CDC346-86 / RSK2980).